The chain runs to 673 residues: eEF1A lysine and N-terminal methyltransferase homolog (673 aa).

The protein belongs to the methyltransferase superfamily.

The catalysed reaction is L-lysyl-[protein] + S-adenosyl-L-methionine = N(6)-methyl-L-lysyl-[protein] + S-adenosyl-L-homocysteine + H(+). It catalyses the reaction N(6)-methyl-L-lysyl-[protein] + S-adenosyl-L-methionine = N(6),N(6)-dimethyl-L-lysyl-[protein] + S-adenosyl-L-homocysteine + H(+). The enzyme catalyses N-terminal glycyl-L-lysyl-L-glutamyl-[protein] + 3 S-adenosyl-L-methionine = N-terminal N,N,N-trimethyl-glycyl-L-lysyl-L-glutamyl-[protein] + 3 S-adenosyl-L-homocysteine + 3 H(+). Functionally, dual methyltransferase. It catalyzes N-terminal methylation of target proteins via its C-terminus. It catalyzes dimethylation on lysine residues of target proteins via its N-terminus. The protein is eEF1A lysine and N-terminal methyltransferase homolog of Drosophila melanogaster (Fruit fly).